Consider the following 515-residue polypeptide: Glucose-6-phosphate 1-dehydrogenase (515 aa).

Positions 53 and 160 each coordinate NADP(+). The substrate site is built by His-190, Lys-194, Glu-228, and Asp-247. The Proton acceptor role is filled by His-252. A substrate-binding site is contributed by Lys-352.

It belongs to the glucose-6-phosphate dehydrogenase family.

It carries out the reaction D-glucose 6-phosphate + NADP(+) = 6-phospho-D-glucono-1,5-lactone + NADPH + H(+). The protein operates within carbohydrate degradation; pentose phosphate pathway; D-ribulose 5-phosphate from D-glucose 6-phosphate (oxidative stage): step 1/3. Functionally, catalyzes the oxidation of glucose 6-phosphate to 6-phosphogluconolactone. This Treponema pallidum (strain Nichols) protein is Glucose-6-phosphate 1-dehydrogenase.